The following is a 346-amino-acid chain: Probable electron transfer flavoprotein subunit alpha, mitochondrial (346 aa).

Residue 285-313 participates in FAD binding; sequence LYVAIGISGAIQHLAGMKESKMIIAINKD.

The protein belongs to the ETF alpha-subunit/FixB family. As to quaternary structure, heterodimer of an alpha and a beta subunit. The cofactor is FAD.

The protein localises to the mitochondrion matrix. The electron transfer flavoprotein serves as a specific electron acceptor for several dehydrogenases, including five acyl-CoA dehydrogenases, glutaryl-CoA and sarcosine dehydrogenase. It transfers the electrons to the main mitochondrial respiratory chain via ETF-ubiquinone oxidoreductase (ETF dehydrogenase). The sequence is that of Probable electron transfer flavoprotein subunit alpha, mitochondrial (ETF1) from Cryptococcus neoformans var. neoformans serotype D (strain B-3501A) (Filobasidiella neoformans).